Consider the following 338-residue polypeptide: Phenylalanine--tRNA ligase alpha subunit (338 aa).

Mg(2+) is bound at residue Glu-252.

Belongs to the class-II aminoacyl-tRNA synthetase family. Phe-tRNA synthetase alpha subunit type 1 subfamily. In terms of assembly, tetramer of two alpha and two beta subunits. Mg(2+) serves as cofactor.

Its subcellular location is the cytoplasm. It catalyses the reaction tRNA(Phe) + L-phenylalanine + ATP = L-phenylalanyl-tRNA(Phe) + AMP + diphosphate + H(+). This is Phenylalanine--tRNA ligase alpha subunit from Pseudomonas aeruginosa (strain UCBPP-PA14).